Reading from the N-terminus, the 72-residue chain is Large ribosomal subunit protein bL31 (72 aa).

Belongs to the bacterial ribosomal protein bL31 family. Type A subfamily. In terms of assembly, part of the 50S ribosomal subunit.

Its function is as follows. Binds the 23S rRNA. In Maricaulis maris (strain MCS10) (Caulobacter maris), this protein is Large ribosomal subunit protein bL31.